Consider the following 524-residue polypeptide: Na(+)/H(+) antiporter NhaG (524 aa).

The next 11 membrane-spanning stretches (helical) occupy residues 6–26, 33–53, 59–79, 98–118, 126–146, 169–189, 193–213, 242–262, 283–303, 312–332, and 374–394; these read LHHI…ITAI, PYPI…IPLF, FITE…PALL, VLAL…SSMW, AAFV…LSIF, LAVV…DLGI, GLGL…GGVL, FLLA…AALI, FWDV…GLEI, WGLA…AVYI, and DILV…GLTI.

Belongs to the monovalent cation:proton antiporter 1 (CPA1) transporter (TC 2.A.36) family.

Its subcellular location is the cell membrane. In terms of biological role, na(+)/H(+) antiporter that extrudes sodium in exchange for external protons. Can also transport lithium. In Bacillus atrophaeus, this protein is Na(+)/H(+) antiporter NhaG (nhaG).